Consider the following 559-residue polypeptide: MDSPGYNCFVDKDKMDAAIQDLGPKELSCTELQELKQLARQGYWAQSHALRGKVYQRLIRDIPCRTVTPDASVYSDIVGKIVGKHSSSCLPLPEFVDNTQVPSYCLNARGEGAVRKILLCLANQFPDISFCPALPAVVALLLHYSIDEAECFEKACRILACNDPGRRLIDQSFLAFESSCMTFGDLVNKYCQAAHKLMVAVSEDVLQVYADWQRWLFGELPLCYFARVFDVFLVEGYKVLYRVALAILKFFHKVRAGQPLESDSVKQDIRTFVRDIAKTVSPEKLLEKAFAIRLFSRKEIQLLQMANEKALKQKGITVKQKSVSLSKRQFVHLAVHAENFRSEIVSVREMRDIWSWVPERFALCQPLLLFSSLQHGYSLARFYFQCEGHEPTLLLIKTTQKEVCGAYLSTDWSERNKFGGKLGFFGTGECFVFRLQPEVQRYEWVVIKHPELTKPPPLMAAEPTAPLSHSASSDPADRLSPFLAARHFNLPSKTESMFMAGGSDCLIVGGGGGQALYIDGDLNRGRTSHCDTFNNQPLCSENFLIAAVEAWGFQDPDTQ.

A 1,2-diacyl-sn-glycero-3-phospho-(1D-myo-inositol) is bound by residues Lys36, Arg40, Lys238, Arg242, and 293-297 (RLFSR). In terms of domain architecture, Rab-GAP TBC spans 47 to 262 (SHALRGKVYQ…KVRAGQPLES (216 aa)). Residues 343–554 (EIVSVREMRD…IAAVEAWGFQ (212 aa)) form the TLDc domain. Phosphoserine occurs at positions 473 and 480.

In terms of assembly, interacts with ARF6. As to expression, highest expression in brain.

The protein resides in the cell membrane. Its subcellular location is the cytoplasm. The protein localises to the cytoplasmic vesicle membrane. It is found in the presynapse. May act as a GTPase-activating protein for Rab family protein(s). Involved in neuronal projections development, probably through a negative modulation of ARF6 function. Involved in the regulation of synaptic vesicle trafficking. The chain is TBC1 domain family member 24 (TBC1D24) from Homo sapiens (Human).